Here is a 390-residue protein sequence, read N- to C-terminus: Lipid droplet-regulating VLDL assembly factor AUP1 homolog (390 aa).

Residues Met1–Lys32 lie on the Cytoplasmic side of the membrane. The stretch at Ile33 to Gly53 is an intramembrane region. Residues Phe54 to Ser390 lie on the Cytoplasmic side of the membrane. Residues Gln305 to Ile347 form the CUE domain.

It belongs to the AUP1 family.

It is found in the endoplasmic reticulum membrane. It localises to the lipid droplet. In Caenorhabditis elegans, this protein is Lipid droplet-regulating VLDL assembly factor AUP1 homolog.